Here is a 315-residue protein sequence, read N- to C-terminus: MAAGVPCALVTSCSSAFSGDQLVQHILGTEDLIVELTSNDAVRFYPWTIDNKYYSADINLCVVPNKFLVTAEIAESVQAFVVYFDGTQKSGLDSVSSWLPLAEAWLPEVMILVCDRVSEDGINRQKAQEWCIKHGFELVELSPEELPEEDDDFPESTGVKRIVQALNANVWSNVVMKNDRNQGFSLLNSLTGTNHSIGSADPCHPEQPHLPAADRTESLSDHRGGASNTTDAQVDSIVDPMLDLDIQELASLTTGGGDVENFERLFSKLKEMKDKAATLPHEQRKVHAEKVAKAFWMAIGGDRDEIEGLSSDEEH.

The interval 197-233 is disordered; that stretch reads IGSADPCHPEQPHLPAADRTESLSDHRGGASNTTDAQ. The span at 203–224 shows a compositional bias: basic and acidic residues; sequence CHPEQPHLPAADRTESLSDHRG. Residues Ser310 and Ser311 each carry the phosphoserine modification.

In terms of assembly, associated with AP-1 and AP-2 complexes.

Its subcellular location is the cytoplasm. The protein localises to the cytosol. Its function is as follows. May be involved in endocytic recycling of growth factor receptors such as EGFR. The sequence is that of Alpha- and gamma-adaptin-binding protein p34 (AAGAB) from Pongo abelii (Sumatran orangutan).